The primary structure comprises 284 residues: MIGTQSILPPGFGPGSHGEEDRLDYLPMPREMHTFERPSLPEPEQLDSHPIALALLERLQEALTAYRIGEQSRVIGLDRQPKADLKLLQQILGEGEVAIQVGGQRPVRIQETVLAGVWWVQLQVGLGEVVGQWLEVADIPALVRRRAFAEARWPRLGATLPDDLLNAGPVLVELLEAAKQHAEHASATPHVINLSLLPFSAEDQRFLAEQLGEGPVTVLSRGYGNCRIASTATPGIWRVQYFNSTDRLILDTLEVTAIPQAACAAQEDIDDSAERLREIREALE.

The segment at 1–23 (MIGTQSILPPGFGPGSHGEEDRL) is disordered.

Belongs to the HupH/HyaF family.

The sequence is that of Hydrogenase expression/formation protein HupQ (hupQ) from Azotobacter chroococcum mcd 1.